A 295-amino-acid chain; its full sequence is Universal stress protein Mb2028c (295 aa).

ATP-binding positions include Gly-13, 117 to 123 (GSSGRGA), 131 to 132 (SV), Gly-165, Asp-198, 262 to 268 (GSHGRGG), and 276 to 278 (SVS).

It belongs to the universal stress protein A family.

This Mycobacterium bovis (strain ATCC BAA-935 / AF2122/97) protein is Universal stress protein Mb2028c.